A 447-amino-acid polypeptide reads, in one-letter code: uncharacterized protein (447 aa).

Transmembrane regions (helical) follow at residues 28–48 (IVIVSATYSISLDSTVLYPAV), 241–261 (IDASFTSIFYSVFMLSIYYAI), and 397–417 (PFVLNVITVADGPCSFSLSIF).

The protein localises to the membrane. This is an uncharacterized protein from Schizosaccharomyces pombe (strain 972 / ATCC 24843) (Fission yeast).